A 354-amino-acid chain; its full sequence is Phosphate acyltransferase (354 aa).

Belongs to the PlsX family. Homodimer. Probably interacts with PlsY.

The protein localises to the cytoplasm. It carries out the reaction a fatty acyl-[ACP] + phosphate = an acyl phosphate + holo-[ACP]. Its pathway is lipid metabolism; phospholipid metabolism. In terms of biological role, catalyzes the reversible formation of acyl-phosphate (acyl-PO(4)) from acyl-[acyl-carrier-protein] (acyl-ACP). This enzyme utilizes acyl-ACP as fatty acyl donor, but not acyl-CoA. This Nitrobacter hamburgensis (strain DSM 10229 / NCIMB 13809 / X14) protein is Phosphate acyltransferase.